Consider the following 100-residue polypeptide: Aspartyl/glutamyl-tRNA(Asn/Gln) amidotransferase subunit C (100 aa).

The protein belongs to the GatC family. Heterotrimer of A, B and C subunits.

It catalyses the reaction L-glutamyl-tRNA(Gln) + L-glutamine + ATP + H2O = L-glutaminyl-tRNA(Gln) + L-glutamate + ADP + phosphate + H(+). It carries out the reaction L-aspartyl-tRNA(Asn) + L-glutamine + ATP + H2O = L-asparaginyl-tRNA(Asn) + L-glutamate + ADP + phosphate + 2 H(+). Allows the formation of correctly charged Asn-tRNA(Asn) or Gln-tRNA(Gln) through the transamidation of misacylated Asp-tRNA(Asn) or Glu-tRNA(Gln) in organisms which lack either or both of asparaginyl-tRNA or glutaminyl-tRNA synthetases. The reaction takes place in the presence of glutamine and ATP through an activated phospho-Asp-tRNA(Asn) or phospho-Glu-tRNA(Gln). The chain is Aspartyl/glutamyl-tRNA(Asn/Gln) amidotransferase subunit C from Streptococcus uberis (strain ATCC BAA-854 / 0140J).